A 379-amino-acid chain; its full sequence is V-type proton ATPase subunit S1 (379 aa).

Residues 1–17 (MLWKSLIALCVIGAAVA) form the signal peptide. At 18 to 333 (EQTPVFLWGA…WDCVGFVTPG (316 aa)) the chain is on the lumenal side. Asn225 and Asn284 each carry an N-linked (GlcNAc...) asparagine glycan. Cys282 and Cys326 form a disulfide bridge. A helical transmembrane segment spans residues 334-354 (ILMGLFVVALLLVIMFVGVCW). Residues 355–379 (MMDINTMDRFDDPKGKTITINAAAE) lie on the Cytoplasmic side of the membrane.

This sequence belongs to the vacuolar ATPase subunit S1 family. In terms of assembly, accessory component of the multisubunit proton-transporting vacuolar (V)-ATPase protein pump. May interact with ATP6AP2.

The protein localises to the endoplasmic reticulum membrane. Its function is as follows. Accessory subunit of the proton-transporting vacuolar (V)-ATPase protein pump, which is required for luminal acidification of secretory vesicles. The protein is V-type proton ATPase subunit S1 of Drosophila melanogaster (Fruit fly).